A 169-amino-acid chain; its full sequence is ATP synthase subunit b (169 aa).

A helical transmembrane segment spans residues 12–32 (PSVGLIFWKTVAFLIFLYILY). The segment at 69-107 (AENEEARREAEQKAQQILREARDSAEELREEEKAKTRRE) is disordered. Over residues 87 to 107 (REARDSAEELREEEKAKTRRE) the composition is skewed to basic and acidic residues.

This sequence belongs to the ATPase B chain family. F-type ATPases have 2 components, F(1) - the catalytic core - and F(0) - the membrane proton channel. F(1) has five subunits: alpha(3), beta(3), gamma(1), delta(1), epsilon(1). F(0) has three main subunits: a(1), b(2) and c(10-14). The alpha and beta chains form an alternating ring which encloses part of the gamma chain. F(1) is attached to F(0) by a central stalk formed by the gamma and epsilon chains, while a peripheral stalk is formed by the delta and b chains.

Its subcellular location is the cell inner membrane. Functionally, f(1)F(0) ATP synthase produces ATP from ADP in the presence of a proton or sodium gradient. F-type ATPases consist of two structural domains, F(1) containing the extramembraneous catalytic core and F(0) containing the membrane proton channel, linked together by a central stalk and a peripheral stalk. During catalysis, ATP synthesis in the catalytic domain of F(1) is coupled via a rotary mechanism of the central stalk subunits to proton translocation. Its function is as follows. Component of the F(0) channel, it forms part of the peripheral stalk, linking F(1) to F(0). In Salinibacter ruber (strain DSM 13855 / M31), this protein is ATP synthase subunit b.